We begin with the raw amino-acid sequence, 179 residues long: Large ribosomal subunit protein uL5 (179 aa).

The protein belongs to the universal ribosomal protein uL5 family. Part of the 50S ribosomal subunit; part of the 5S rRNA/L5/L18/L25 subcomplex. Contacts the 5S rRNA and the P site tRNA. Forms a bridge to the 30S subunit in the 70S ribosome.

Its function is as follows. This is one of the proteins that bind and probably mediate the attachment of the 5S RNA into the large ribosomal subunit, where it forms part of the central protuberance. In the 70S ribosome it contacts protein S13 of the 30S subunit (bridge B1b), connecting the 2 subunits; this bridge is implicated in subunit movement. Contacts the P site tRNA; the 5S rRNA and some of its associated proteins might help stabilize positioning of ribosome-bound tRNAs. This Ectopseudomonas mendocina (strain ymp) (Pseudomonas mendocina) protein is Large ribosomal subunit protein uL5.